The sequence spans 2742 residues: Neurobeachin-like protein 2 (2742 aa).

Disordered regions lie at residues 1312–1333 (ALSP…PSES) and 1356–1434 (LERA…QQTP). Residues 1384–1394 (TPSPLDGPRPF) show a composition bias toward pro residues. Residues 1421-1433 (GDDTSNTSNPQQT) are compositionally biased toward polar residues. A Phosphothreonine modification is found at Thr-1855. Residues 1903 to 2028 (EKREKLVLSA…LRNQVYSLLL (126 aa)) enclose the BEACH-type PH domain. One can recognise a BEACH domain in the interval 2041–2333 (RSPLEMLRAS…QLLKEPHPPR (293 aa)). 7 WD repeats span residues 2374–2412 (LVLA…TWLP), 2436–2479 (KLLS…SLPR), 2482–2519 (LLNQ…VWRL), 2532–2570 (KPVQ…IHTV), 2577–2619 (AALR…TYSL), 2627–2662 (RLRA…ILHL), and 2670–2705 (PPLP…VGAG). Phosphoserine occurs at positions 2727 and 2730.

It belongs to the WD repeat neurobeachin family.

The protein resides in the endoplasmic reticulum. In terms of biological role, probably involved in thrombopoiesis. Plays a role in the development or secretion of alpha-granules, that contain several growth factors important for platelet biogenesis. This Mus musculus (Mouse) protein is Neurobeachin-like protein 2 (Nbeal2).